The chain runs to 375 residues: MAGRTILLSAGGTGGHLFPAEALAHELRARGWSVHLATDKRATRFAGTFPADEIHAIDSATFGSRNPLALLKSGLSIWRGFKQSTALINRLKPAAVVGFGGYPTLPPLYAATRRQVPTLVHEQNAVMGRANKALAPRVTAIAGGFLPESDGPFASKTVLTGNPVRPAVIQASGTPYAPSSGRGVFRLLVFGGSQGAQYFSQVVPEAVRLLPATLRSRLRIVQQARPEDEGPVRSAYDELGVKAEVSPFFTDLASRIADAHLVISRSGASTVSEIAVIGRPAILVPYPYALDHDQAANATALERAGGAEIVPQEKLSAERLRGLLEVAMGAPDKLAAMAAAAKSVGRPDASRLLADVTEAIASGETVTEFKRRRSA.

UDP-N-acetyl-alpha-D-glucosamine contacts are provided by residues T13–G15, N124, R165, S193, and Q294.

The protein belongs to the glycosyltransferase 28 family. MurG subfamily.

Its subcellular location is the cell inner membrane. The catalysed reaction is di-trans,octa-cis-undecaprenyl diphospho-N-acetyl-alpha-D-muramoyl-L-alanyl-D-glutamyl-meso-2,6-diaminopimeloyl-D-alanyl-D-alanine + UDP-N-acetyl-alpha-D-glucosamine = di-trans,octa-cis-undecaprenyl diphospho-[N-acetyl-alpha-D-glucosaminyl-(1-&gt;4)]-N-acetyl-alpha-D-muramoyl-L-alanyl-D-glutamyl-meso-2,6-diaminopimeloyl-D-alanyl-D-alanine + UDP + H(+). Its pathway is cell wall biogenesis; peptidoglycan biosynthesis. In terms of biological role, cell wall formation. Catalyzes the transfer of a GlcNAc subunit on undecaprenyl-pyrophosphoryl-MurNAc-pentapeptide (lipid intermediate I) to form undecaprenyl-pyrophosphoryl-MurNAc-(pentapeptide)GlcNAc (lipid intermediate II). The sequence is that of UDP-N-acetylglucosamine--N-acetylmuramyl-(pentapeptide) pyrophosphoryl-undecaprenol N-acetylglucosamine transferase from Chelativorans sp. (strain BNC1).